We begin with the raw amino-acid sequence, 566 residues long: MGSKHKKNASKSLRAFSFIILSASIALVYIFNPVKLIFPSSIIRFHHGLPPQSQEIVTEQPKSHSKFQLKHIYHHGSGKNYKIHRRLDITPEYLAKHDAYFQHFNQLQSGTEQVSLDNLDSVVAQYDWPKHHQGKNPWTIELPMKIAKRPAVRLKQRHDHNYIDSYLQYALSVKSNPQHINNVQLEWISEDISVPDVKDRDTVVSLATISSNAYVRFPKDDDEKKNSDWIDVGEPWVPDDRNNNIEFGWGDDGLRGHIFVSEDNKTVVIGVKGTSGAGLPGSGSEETQANDKTNDNLLFSCCCARISYMWTTVCDCYEKTYTCNQDCLEKELVRKDRYYQAVLDLYRNVTEIYPSESHDIWVTGHSLGGALASLLGRTYGLPVVAYEAPGEMLATQRLHLPQPPGLPKHAENIWHFGNTADPIFMGVCNGASSSCNLAGYALETACHTGRQCVYDVVTDKGWHVNLLNHRIHTVIDDIIMTYNDTAPCADQPPCRDCFNWRFTSRDDSLDDEPPLPNPLRPGKPSTTSSSQHHTSTTTTTETSRPQKCLKRTWYGWCVEWGDEEDA.

Topologically, residues 1–17 are cytoplasmic; it reads MGSKHKKNASKSLRAFS. The chain crosses the membrane as a helical; Signal-anchor for type II membrane protein span at residues 18-38; it reads FIILSASIALVYIFNPVKLIF. The Lumenal portion of the chain corresponds to 39 to 566; that stretch reads PSSIIRFHHG…CVEWGDEEDA (528 aa). Asn264 and Asn348 each carry an N-linked (GlcNAc...) asparagine glycan. Ser366 acts as the Charge relay system in catalysis. Asn483 carries N-linked (GlcNAc...) asparagine glycosylation. Residues 507 to 545 are disordered; it reads DSLDDEPPLPNPLRPGKPSTTSSSQHHTSTTTTTETSRP. A compositionally biased stretch (low complexity) spans 522–543; it reads GKPSTTSSSQHHTSTTTTTETS.

This sequence belongs to the AB hydrolase superfamily. Lipase family. In terms of assembly, binds to both phosphatidylinositol (PI) and phosphatidylinositol 3,5-bisphosphate (PIP2).

The protein resides in the endosome. It localises to the multivesicular body membrane. Its subcellular location is the prevacuolar compartment membrane. It carries out the reaction a triacylglycerol + H2O = a diacylglycerol + a fatty acid + H(+). Lipase which is essential for lysis of subvacuolar cytoplasm to vacuole targeted bodies and intravacuolar autophagic bodies. Involved in the lysis of intravacuolar multivesicular body (MVB) vesicles. The intravacuolar membrane disintegration by ATG15 is critical to life span extension. The sequence is that of Putative lipase ATG15 (ATG15) from Meyerozyma guilliermondii (strain ATCC 6260 / CBS 566 / DSM 6381 / JCM 1539 / NBRC 10279 / NRRL Y-324) (Yeast).